The chain runs to 669 residues: DNA ligase (669 aa).

NAD(+)-binding positions include 32–36, 81–82, and Glu-113; these read DAEYD and SL. Residue Lys-115 is the N6-AMP-lysine intermediate of the active site. Arg-136, Glu-173, Lys-290, and Lys-314 together coordinate NAD(+). The Zn(2+) site is built by Cys-408, Cys-411, Cys-426, and Cys-432. One can recognise a BRCT domain in the interval 592–669; the sequence is AVDSALAGKI…DEQALIEFLK (78 aa).

Belongs to the NAD-dependent DNA ligase family. LigA subfamily. It depends on Mg(2+) as a cofactor. Requires Mn(2+) as cofactor.

It catalyses the reaction NAD(+) + (deoxyribonucleotide)n-3'-hydroxyl + 5'-phospho-(deoxyribonucleotide)m = (deoxyribonucleotide)n+m + AMP + beta-nicotinamide D-nucleotide.. Its function is as follows. DNA ligase that catalyzes the formation of phosphodiester linkages between 5'-phosphoryl and 3'-hydroxyl groups in double-stranded DNA using NAD as a coenzyme and as the energy source for the reaction. It is essential for DNA replication and repair of damaged DNA. This chain is DNA ligase, found in Vibrio cholerae serotype O1 (strain ATCC 39541 / Classical Ogawa 395 / O395).